Here is a 386-residue protein sequence, read N- to C-terminus: Flap endonuclease 1 (386 aa).

The segment at 1–104 (MGILGLSKLI…GELAKRAERR (104 aa)) is N-domain. Asp-34 is a Mg(2+) binding site. Arg-47 and Arg-70 together coordinate DNA. Mg(2+) is bound by residues Asp-86, Glu-158, Glu-160, Asp-179, and Asp-181. The segment at 122–253 (EIEKFNRRLV…KRAIELINNY (132 aa)) is I-domain. Glu-158 is a DNA binding site. Gly-231 and Asp-233 together coordinate DNA. Asp-233 is a Mg(2+) binding site. The tract at residues 336-344 (TQVRLDSFF) is interaction with PCNA. Residues 351-386 (PNAVHAAKRKAEEAKKSANNKKAKTSGGAARGRRPK) are disordered.

The protein belongs to the XPG/RAD2 endonuclease family. FEN1 subfamily. As to quaternary structure, interacts with PCNA. Three molecules of FEN1 bind to one PCNA trimer with each molecule binding to one PCNA monomer. PCNA stimulates the nuclease activity without altering cleavage specificity. It depends on Mg(2+) as a cofactor. Phosphorylated. Phosphorylation upon DNA damage induces relocalization to the nuclear plasma.

The protein resides in the nucleus. It localises to the nucleolus. The protein localises to the nucleoplasm. It is found in the mitochondrion. Functionally, structure-specific nuclease with 5'-flap endonuclease and 5'-3' exonuclease activities involved in DNA replication and repair. During DNA replication, cleaves the 5'-overhanging flap structure that is generated by displacement synthesis when DNA polymerase encounters the 5'-end of a downstream Okazaki fragment. It enters the flap from the 5'-end and then tracks to cleave the flap base, leaving a nick for ligation. Also involved in the long patch base excision repair (LP-BER) pathway, by cleaving within the apurinic/apyrimidinic (AP) site-terminated flap. Acts as a genome stabilization factor that prevents flaps from equilibrating into structures that lead to duplications and deletions. Also possesses 5'-3' exonuclease activity on nicked or gapped double-stranded DNA, and exhibits RNase H activity. Also involved in replication and repair of rDNA and in repairing mitochondrial DNA. The polypeptide is Flap endonuclease 1 (Drosophila persimilis (Fruit fly)).